A 44-amino-acid polypeptide reads, in one-letter code: Photosystem I reaction center subunit IX (44 aa).

Residues 7–27 traverse the membrane as a helical segment; that stretch reads YLSVAPVLSTLWFGSLAGLLI.

This sequence belongs to the PsaJ family.

It localises to the plastid. Its subcellular location is the chloroplast thylakoid membrane. Functionally, may help in the organization of the PsaE and PsaF subunits. This is Photosystem I reaction center subunit IX from Fagopyrum esculentum subsp. ancestrale (Wild buckwheat).